The following is a 162-amino-acid chain: uncharacterized protein (162 aa).

An N-terminal signal peptide occupies residues M1 to V34.

This is an uncharacterized protein from Bacillus subtilis (strain 168).